A 119-amino-acid polypeptide reads, in one-letter code: V-type proton ATPase subunit F (119 aa).

This sequence belongs to the V-ATPase F subunit family. V-ATPase is a heteromultimeric enzyme made up of two complexes: the ATP-hydrolytic V1 complex and the proton translocation V0 complex. The V1 complex consists of three catalytic AB heterodimers that form a heterohexamer, three peripheral stalks each consisting of EG heterodimers, one central rotor including subunits D and F, and the regulatory subunits C and H. The proton translocation complex V0 consists of the proton transport subunit a, a ring of proteolipid subunits c9c'', rotary subunit d, subunits e and f, and the accessory subunits ATP6AP1/Ac45 and ATP6AP2/PRR. In terms of tissue distribution, expressed in brain (at protein level).

The protein localises to the cytoplasmic vesicle. It localises to the secretory vesicle. Its subcellular location is the synaptic vesicle membrane. The protein resides in the clathrin-coated vesicle membrane. Functionally, subunit of the V1 complex of vacuolar(H+)-ATPase (V-ATPase), a multisubunit enzyme composed of a peripheral complex (V1) that hydrolyzes ATP and a membrane integral complex (V0) that translocates protons. V-ATPase is responsible for acidifying and maintaining the pH of intracellular compartments and in some cell types, is targeted to the plasma membrane, where it is responsible for acidifying the extracellular environment. This Bos taurus (Bovine) protein is V-type proton ATPase subunit F (ATP6V1F).